The chain runs to 300 residues: Acetylglutamate kinase (300 aa).

Residues 73 to 74 (GG), Arg-95, and Asn-197 each bind substrate.

The protein belongs to the acetylglutamate kinase family. ArgB subfamily.

The protein localises to the cytoplasm. It carries out the reaction N-acetyl-L-glutamate + ATP = N-acetyl-L-glutamyl 5-phosphate + ADP. It functions in the pathway amino-acid biosynthesis; L-arginine biosynthesis; N(2)-acetyl-L-ornithine from L-glutamate: step 2/4. Catalyzes the ATP-dependent phosphorylation of N-acetyl-L-glutamate. This Bordetella pertussis (strain Tohama I / ATCC BAA-589 / NCTC 13251) protein is Acetylglutamate kinase.